The primary structure comprises 503 residues: Aromatase (503 aa).

2 helical membrane-spanning segments follow: residues 19-39 and 53-73; these read EVVP…LLVW and FLGI…IGSA. Positions 309 and 374 each coordinate substrate. Cys437 lines the heme pocket.

This sequence belongs to the cytochrome P450 family. It depends on heme as a cofactor.

The protein localises to the endoplasmic reticulum membrane. The protein resides in the microsome membrane. The enzyme catalyses testosterone + 3 reduced [NADPH--hemoprotein reductase] + 3 O2 = 17beta-estradiol + formate + 3 oxidized [NADPH--hemoprotein reductase] + 4 H2O + 4 H(+). It catalyses the reaction androst-4-ene-3,17-dione + 3 reduced [NADPH--hemoprotein reductase] + 3 O2 = estrone + formate + 3 oxidized [NADPH--hemoprotein reductase] + 4 H2O + 4 H(+). It carries out the reaction androst-4-ene-3,17-dione + reduced [NADPH--hemoprotein reductase] + O2 = 19-hydroxyandrost-4-ene-3,17-dione + oxidized [NADPH--hemoprotein reductase] + H2O + H(+). The catalysed reaction is 19-hydroxyandrost-4-ene-3,17-dione + reduced [NADPH--hemoprotein reductase] + O2 = 19-oxo-androst-4-ene-3,17-dione + oxidized [NADPH--hemoprotein reductase] + 2 H2O + H(+). The enzyme catalyses 19-oxo-androst-4-ene-3,17-dione + reduced [NADPH--hemoprotein reductase] + O2 = estrone + formate + oxidized [NADPH--hemoprotein reductase] + H2O + 2 H(+). It catalyses the reaction estrone + reduced [NADPH--hemoprotein reductase] + O2 = 2-hydroxyestrone + oxidized [NADPH--hemoprotein reductase] + H2O + H(+). It carries out the reaction 17beta-hydroxy-5alpha-androstan-3-one + reduced [NADPH--hemoprotein reductase] + O2 = 17beta,19-dihydroxy-3-oxo-5alpha-androstanone + oxidized [NADPH--hemoprotein reductase] + H2O + H(+). The catalysed reaction is 17beta,19-dihydroxy-3-oxo-5alpha-androstanone + reduced [NADPH--hemoprotein reductase] + O2 = 17beta-hydroxy-3,19-dioxo-5alpha-androstanone + oxidized [NADPH--hemoprotein reductase] + 2 H2O + H(+). The enzyme catalyses 17beta-hydroxy-3,19-dioxo-5alpha-androstanone + reduced [NADPH--hemoprotein reductase] + O2 = 17beta-hydroxy-3-oxo-19-nor-5alpha-androst-1-ene + formate + oxidized [NADPH--hemoprotein reductase] + H2O + 2 H(+). The protein operates within steroid hormone biosynthesis. In terms of biological role, a cytochrome P450 monooxygenase that catalyzes the conversion of C19 androgens, androst-4-ene-3,17-dione (androstenedione) and testosterone to the C18 estrogens, estrone and estradiol, respectively. Catalyzes three successive oxidations of C19 androgens: two conventional oxidations at C19 yielding 19-hydroxy and 19-oxo/19-aldehyde derivatives, followed by a third oxidative aromatization step that involves C1-beta hydrogen abstraction combined with cleavage of the C10-C19 bond to yield a phenolic A ring and formic acid. Alternatively, the third oxidative reaction yields a 19-norsteroid and formic acid. Converts dihydrotestosterone to delta1,10-dehydro 19-nordihydrotestosterone and may play a role in homeostasis of this potent androgen. Also displays 2-hydroxylase activity toward estrone. Mechanistically, uses molecular oxygen inserting one oxygen atom into a substrate, and reducing the second into a water molecule, with two electrons provided by NADPH via cytochrome P450 reductase (CPR; NADPH-ferrihemoprotein reductase). In Bos taurus (Bovine), this protein is Aromatase (CYP19A1).